Reading from the N-terminus, the 489-residue chain is UDP-N-acetylmuramoyl-L-alanyl-D-glutamate--2,6-diaminopimelate ligase (489 aa).

Ser32 is a binding site for UDP-N-acetyl-alpha-D-muramoyl-L-alanyl-D-glutamate. Gly113–Thr119 lines the ATP pocket. UDP-N-acetyl-alpha-D-muramoyl-L-alanyl-D-glutamate is bound by residues Thr154 to Thr155, Ser181, Gln187, and Arg189. Lys221 carries the N6-carboxylysine modification. Meso-2,6-diaminopimelate-binding positions include Arg381, Asp405 to Arg408, Gly456, and Glu460. Residues Asp405–Arg408 carry the Meso-diaminopimelate recognition motif motif.

This sequence belongs to the MurCDEF family. MurE subfamily. Requires Mg(2+) as cofactor. In terms of processing, carboxylation is probably crucial for Mg(2+) binding and, consequently, for the gamma-phosphate positioning of ATP.

The protein resides in the cytoplasm. It catalyses the reaction UDP-N-acetyl-alpha-D-muramoyl-L-alanyl-D-glutamate + meso-2,6-diaminopimelate + ATP = UDP-N-acetyl-alpha-D-muramoyl-L-alanyl-gamma-D-glutamyl-meso-2,6-diaminopimelate + ADP + phosphate + H(+). It participates in cell wall biogenesis; peptidoglycan biosynthesis. Catalyzes the addition of meso-diaminopimelic acid to the nucleotide precursor UDP-N-acetylmuramoyl-L-alanyl-D-glutamate (UMAG) in the biosynthesis of bacterial cell-wall peptidoglycan. This is UDP-N-acetylmuramoyl-L-alanyl-D-glutamate--2,6-diaminopimelate ligase from Gloeobacter violaceus (strain ATCC 29082 / PCC 7421).